A 498-amino-acid chain; its full sequence is DELTA-thalatoxin-Avl2a (498 aa).

The signal sequence occupies residues Met1–Cys22. Residues Ser23–Asn35 constitute a propeptide that is removed on maturation. One can recognise an MACPF domain in the interval Ser23–Leu359. A coiled-coil region spans residues Ala135–Ser159. 3 cysteine pairs are disulfide-bonded: Cys389–Cys402, Cys396–Cys410, and Cys412–Cys422. An EGF-like domain is found at Cys410–Cys422.

Its subcellular location is the secreted. It localises to the nematocyst. Its function is as follows. Is lethal to mice, and may cause hemolytic activity. In Actineria villosa (Okinawan sea anemone), this protein is DELTA-thalatoxin-Avl2a.